Here is a 326-residue protein sequence, read N- to C-terminus: Vitamin B12 import system permease protein BtuC (326 aa).

Transmembrane regions (helical) follow at residues 15-35, 61-81, 88-108, 112-132, 146-166, 184-204, 240-260, 274-294, and 302-322; these read WLLC…CAGE, LAVL…QALF, PGLL…VLLG, LPNW…TLIL, LLAG…AIYF, GGVD…LLWI, GWMV…GLVI, VLLP…DIVA, and ELPI…WLLL.

The protein belongs to the binding-protein-dependent transport system permease family. FecCD subfamily. The complex is composed of two ATP-binding proteins (BtuD), two transmembrane proteins (BtuC) and a solute-binding protein (BtuF).

It localises to the cell inner membrane. In terms of biological role, part of the ABC transporter complex BtuCDF involved in vitamin B12 import. Involved in the translocation of the substrate across the membrane. The sequence is that of Vitamin B12 import system permease protein BtuC from Escherichia coli O7:K1 (strain IAI39 / ExPEC).